The primary structure comprises 81 residues: Protein Vpu (81 aa).

Topologically, residues 1–7 (MQPLGII) are extracellular. A helical membrane pass occupies residues 8 to 28 (AIAALVVAIILAIVVWTIVFI). Topologically, residues 29–81 (EYRRIKKQRRIDCLLDRITERAEDSGNESEGDREKLSKLVEMGHHAPWDIDDL) are cytoplasmic. Phosphoserine; by host CK2 is present on residues Ser53 and Ser57.

Belongs to the HIV-1 VPU protein family. Homopentamer. Interacts with host CD4 and BRTC; these interactions induce proteasomal degradation of CD4. Interacts with host BST2; this interaction leads to the degradation of host BST2. Interacts with host FBXW11. Interacts with host AP1M1; this interaction plays a role in the mistrafficking and subsequent degradation of host BST2. Interacts with host RANBP2; this interaction allows Vpu to down-regulate host BLM sumoylation. Post-translationally, phosphorylated by host CK2. This phosphorylation is necessary for interaction with human BTRC and degradation of CD4.

It localises to the host membrane. Ion channel activity is inhibited by hexamethylene amiloride in vitro. Enhances virion budding by targeting host CD4 and Tetherin/BST2 to proteasome degradation. Degradation of CD4 prevents any unwanted premature interactions between viral Env and its host receptor CD4 in the endoplasmic reticulum. Degradation of antiretroviral protein Tetherin/BST2 is important for virion budding, as BST2 tethers new viral particles to the host cell membrane. Mechanistically, Vpu bridges either CD4 or BST2 to BTRC, a substrate recognition subunit of the Skp1/Cullin/F-box protein E3 ubiquitin ligase, induces their ubiquitination and subsequent proteasomal degradation. The alteration of the E3 ligase specificity by Vpu seems to promote the degradation of host IKBKB, leading to NF-kappa-B down-regulation and subsequent apoptosis. Acts as a viroporin that forms an oligomeric ion channel in membranes. Modulates the host DNA repair mechanisms to promote degradation of nuclear viral cDNA in cells that are already productively infected in order to suppress immune sensing and proviral hyper-integration (superinfection). Manipulates PML-NBs and modulates SUMOylation of host BLM protein thereby enhancing its DNA-end processing activity toward viral unintegrated linear DNA. Also inhibits RAD52-mediated homologous repair of viral cDNA, preventing the generation of dead-end circular forms of single copies of the long terminal repeat and permitting sustained nucleolytic attack. The polypeptide is Protein Vpu (Human immunodeficiency virus type 1 group M subtype D (isolate ELI) (HIV-1)).